A 216-amino-acid polypeptide reads, in one-letter code: Small ribosomal subunit protein uS4 (216 aa).

Positions Arg111–Glu175 constitute an S4 RNA-binding domain. Positions Val194–Arg216 are disordered. Basic and acidic residues predominate over residues Lys198 to Gly208.

It belongs to the universal ribosomal protein uS4 family. Part of the 30S ribosomal subunit. Contacts protein S5. The interaction surface between S4 and S5 is involved in control of translational fidelity.

Functionally, one of the primary rRNA binding proteins, it binds directly to 16S rRNA where it nucleates assembly of the body of the 30S subunit. Its function is as follows. With S5 and S12 plays an important role in translational accuracy. This chain is Small ribosomal subunit protein uS4, found in Methanosarcina barkeri (strain Fusaro / DSM 804).